The following is a 102-amino-acid chain: NAD(P)H-quinone oxidoreductase subunit 4L (102 aa).

A run of 3 helical transmembrane segments spans residues 4–24, 33–53, and 65–85; these read LQFF…GLIV, MSIE…SNFV, and VFVI…VLGI.

It belongs to the complex I subunit 4L family. As to quaternary structure, NDH-1 can be composed of about 15 different subunits; different subcomplexes with different compositions have been identified which probably have different functions.

The protein resides in the cellular thylakoid membrane. It catalyses the reaction a plastoquinone + NADH + (n+1) H(+)(in) = a plastoquinol + NAD(+) + n H(+)(out). It carries out the reaction a plastoquinone + NADPH + (n+1) H(+)(in) = a plastoquinol + NADP(+) + n H(+)(out). Its function is as follows. NDH-1 shuttles electrons from an unknown electron donor, via FMN and iron-sulfur (Fe-S) centers, to quinones in the respiratory and/or the photosynthetic chain. The immediate electron acceptor for the enzyme in this species is believed to be plastoquinone. Couples the redox reaction to proton translocation, and thus conserves the redox energy in a proton gradient. Cyanobacterial NDH-1 also plays a role in inorganic carbon-concentration. The protein is NAD(P)H-quinone oxidoreductase subunit 4L of Synechococcus sp. (strain JA-3-3Ab) (Cyanobacteria bacterium Yellowstone A-Prime).